The primary structure comprises 512 residues: Transmembrane protein 102 (512 aa).

Over 1–267 (MASAVWGNAP…EAWPTLCPAQ (267 aa)) the chain is Extracellular. The tract at residues 168-258 (PVPGGRDWIH…PGPQPSEARE (91 aa)) is disordered. 2 stretches are compositionally biased toward basic and acidic residues: residues 174-186 (DWIH…EGPR) and 195-209 (PHSD…ESLE). Residues 210–226 (KSPSNVSVPESPQQNLT) show a composition bias toward polar residues. The chain crosses the membrane as a helical span at residues 268-284 (VAAWFFASLAAVAESLF). Residues 285–512 (PVPGAPRLVH…GLAGVGAGSH (228 aa)) are Cytoplasmic-facing.

In terms of assembly, interacts with CSF2RB; this interaction occurs preferentially in the absence of CSF2.

The protein localises to the cell membrane. Its function is as follows. Selectively involved in CSF2 deprivation-induced apoptosis via a mitochondria-dependent pathway. The protein is Transmembrane protein 102 (TMEM102) of Bos taurus (Bovine).